A 363-amino-acid polypeptide reads, in one-letter code: Copper-containing nitrite reductase (363 aa).

Positions 1 to 24 (MSVFRSVLGACVLLGSCASSLALA) are cleaved as a signal peptide. 2 Plastocyanin-like domains span residues 25-193 (GGAE…YDRV) and 194-363 (YTIG…EPKQ). Cu cation contacts are provided by H113, H118, H153, C154, H163, M168, and H324.

It belongs to the multicopper oxidase family. In terms of assembly, homotrimer. It depends on Cu(2+) as a cofactor. Cu(+) is required as a cofactor. FAD serves as cofactor.

The protein localises to the periplasm. The catalysed reaction is nitric oxide + Fe(III)-[cytochrome c] + H2O = Fe(II)-[cytochrome c] + nitrite + 2 H(+). The protein operates within nitrogen metabolism; nitrate reduction (denitrification); dinitrogen from nitrate: step 2/4. The polypeptide is Copper-containing nitrite reductase (nirK) (Pseudomonas chlororaphis (Pseudomonas aureofaciens)).